Reading from the N-terminus, the 250-residue chain is tRNA (guanine-N(1)-)-methyltransferase (250 aa).

S-adenosyl-L-methionine is bound by residues glycine 115 and 135 to 140 (LGDFVL).

Belongs to the RNA methyltransferase TrmD family. As to quaternary structure, homodimer.

It localises to the cytoplasm. The enzyme catalyses guanosine(37) in tRNA + S-adenosyl-L-methionine = N(1)-methylguanosine(37) in tRNA + S-adenosyl-L-homocysteine + H(+). In terms of biological role, specifically methylates guanosine-37 in various tRNAs. This is tRNA (guanine-N(1)-)-methyltransferase from Legionella pneumophila subsp. pneumophila (strain Philadelphia 1 / ATCC 33152 / DSM 7513).